The sequence spans 78 residues: Large ribosomal subunit protein bL28 (78 aa).

Residues 1–21 form a disordered region; it reads MSRVCQVTGKRPVSGNNRSHA.

The protein belongs to the bacterial ribosomal protein bL28 family.

The sequence is that of Large ribosomal subunit protein bL28 from Sodalis glossinidius (strain morsitans).